Consider the following 432-residue polypeptide: Glutamyl-tRNA reductase (432 aa).

Substrate contacts are provided by residues 49–52 (TCNR), Ser-101, 106–108 (ESQ), and Gln-112. Catalysis depends on Cys-50, which acts as the Nucleophile. 181 to 186 (GTGETI) provides a ligand contact to NADP(+).

The protein belongs to the glutamyl-tRNA reductase family. As to quaternary structure, homodimer.

The catalysed reaction is (S)-4-amino-5-oxopentanoate + tRNA(Glu) + NADP(+) = L-glutamyl-tRNA(Glu) + NADPH + H(+). It functions in the pathway porphyrin-containing compound metabolism; protoporphyrin-IX biosynthesis; 5-aminolevulinate from L-glutamyl-tRNA(Glu): step 1/2. In terms of biological role, catalyzes the NADPH-dependent reduction of glutamyl-tRNA(Glu) to glutamate 1-semialdehyde (GSA). In Xylella fastidiosa (strain M12), this protein is Glutamyl-tRNA reductase.